The sequence spans 144 residues: Large ribosomal subunit protein uL14 (144 aa).

Belongs to the universal ribosomal protein uL14 family. In terms of assembly, part of the 50S ribosomal subunit. Forms a cluster with proteins L3 and L24e, part of which may contact the 16S rRNA in 2 intersubunit bridges.

Binds to 23S rRNA. Forms part of two intersubunit bridges in the 70S ribosome. This chain is Large ribosomal subunit protein uL14, found in Cenarchaeum symbiosum (strain A).